We begin with the raw amino-acid sequence, 630 residues long: Forkhead box protein O (630 aa).

Positions 1–45 (MDGFVQEWSNLPRSDNGLHMDQLVGELPTDGGFEPQTRARSNTWP) are disordered. At Thr43 the chain carries Phosphothreonine; by PKB/AKT1. The fork-head DNA-binding region spans 92–198 (WGNLSYADLI…ETSRYEKRRG (107 aa)). Residue Ser187 is modified to Phosphoserine; by PKB/AKT1. The interval 214–260 (GLNDATPSPSSSVSEGLDHFPESPLHSGGFQLSPDFRQRASSNASSC) is disordered. The span at 218 to 227 (ATPSPSSSVS) shows a compositional bias: polar residues. A Phosphoserine; by PKB/AKT1 modification is found at Ser255. 3 positions are modified to phosphoserine: Ser258, Ser259, and Ser264. 2 disordered regions span residues 318 to 379 (SAAS…QQQQ) and 403 to 432 (TRDGLSPNSVTTTMSPAYPNSEPSSDSLNT). Low complexity-rich tracts occupy residues 332-350 (QQQQQQQQQQAQQQSQLPQ) and 367-379 (QPQAQQQQQQQQQ). Polar residues-rich tracts occupy residues 408–417 (SPNSVTTTMS) and 423–432 (SEPSSDSLNT).

In terms of assembly, interacts with melt.

It localises to the cytoplasm. The protein localises to the nucleus. Transcription factor involved in the regulation of the insulin signaling pathway. Consistently activates both the downstream target Thor\d4EBP and the feedback control target InR. Involved in negative regulation of the cell cycle, modulating cell growth and proliferation. In response to cellular stresses, such as nutrient deprivation or increased levels of reactive oxygen species, foxo is activated and inhibits growth through the action of target genes such as Thor. Foxo activated in the adult fat body can regulate lifespan in adults; an insulin peptide itself may function as one secondary messenger of insulin-regulated aging. Also regulates Lip4, homolog of human acid lipases, thereby acting as a key modulator of lipid metabolism by insulin signaling and integrates insulin responses to glucose and lipid homeostasis. In Drosophila grimshawi (Hawaiian fruit fly), this protein is Forkhead box protein O.